A 135-amino-acid polypeptide reads, in one-letter code: Class I hydrophobin dewA (135 aa).

Residues 1–18 (MRFIVSLLAFTAAATATA) form the signal peptide. Intrachain disulfides connect Cys44/Cys114, Cys51/Cys108, Cys52/Cys84, and Cys115/Cys122. A glycan (N-linked (GlcNAc...) asparagine) is linked at Asn60.

This sequence belongs to the fungal hydrophobin family. As to quaternary structure, forms homodimers at high concentrations, and these dimers are off-pathway to rodlet formation. Dissociation of the dimers into monomers, with resultant exposure of the hydrophobic face, is necessary for self-assembly to form functional amyloid fibrils called rodlets. Self-assembly into fibrillar rodlets occurs spontaneously at hydrophobic:hydrophilic interfaces and the rodlets further associate laterally to form amphipathic monolayers.

It is found in the secreted. It localises to the spore wall. Aerial growth, conidiation, and dispersal of filamentous fungi in the environment rely upon a capability of their secreting small amphipathic proteins called hydrophobins (HPBs) with low sequence identity. Class I can self-assemble into an outermost layer of rodlet bundles on aerial cell surfaces, conferring cellular hydrophobicity that supports fungal growth, development and dispersal; whereas Class II form highly ordered films at water-air interfaces through intermolecular interactions but contribute nothing to the rodlet structure. DewA is a class I hydrophobin that contributes to spore wall hydrophobicity. This Emericella nidulans (strain FGSC A4 / ATCC 38163 / CBS 112.46 / NRRL 194 / M139) (Aspergillus nidulans) protein is Class I hydrophobin dewA.